A 175-amino-acid chain; its full sequence is Endoribonuclease YbeY (175 aa).

3 residues coordinate Zn(2+): His137, His141, and His147.

The protein belongs to the endoribonuclease YbeY family. Zn(2+) serves as cofactor.

The protein resides in the cytoplasm. Functionally, single strand-specific metallo-endoribonuclease involved in late-stage 70S ribosome quality control and in maturation of the 3' terminus of the 16S rRNA. The protein is Endoribonuclease YbeY of Burkholderia ambifaria (strain ATCC BAA-244 / DSM 16087 / CCUG 44356 / LMG 19182 / AMMD) (Burkholderia cepacia (strain AMMD)).